Here is a 535-residue protein sequence, read N- to C-terminus: Genetic interactor of prohibitins 3, mitochondrial (535 aa).

The transit peptide at 1 to 38 directs the protein to the mitochondrion; the sequence is MLPVSRLCVRSSLRKLVFVRFVSCTSCGVTLQNNNVRG. Residues 111–283 enclose the CP-type G domain; sequence MQEVYRHVPA…INDLPGYSTN (173 aa).

It belongs to the TRAFAC class YlqF/YawG GTPase family. GEP3 subfamily.

The protein localises to the mitochondrion. May be involved in the mitochondrial lipid metabolism. This Lachancea thermotolerans (strain ATCC 56472 / CBS 6340 / NRRL Y-8284) (Yeast) protein is Genetic interactor of prohibitins 3, mitochondrial (GEP3).